We begin with the raw amino-acid sequence, 389 residues long: Lipopolysaccharide assembly protein B (389 aa).

A helical membrane pass occupies residues 1–20; sequence MLELLFLLLPVAAAYGWYMG. Over 21 to 389 the chain is Cytoplasmic; the sequence is RRSAQQNKQD…IKPIRGLDGL (369 aa). TPR repeat units lie at residues 35–68, 69–102, 107–140, 142–174, 180–213, 214–247, and 249–282; these read LSRDYVAGVNFLLSNQQDKAVDLFLDMLKEDTGT, VEAHLTLGNLFRSRGEVDRAIRIHQTLMESASLT, LLAIQQLGRDYMAAGLYDRAEDMFNQLTDETDFR, GALQQLLQIYQATSEWQKAIDVAERLVKLGKDK, AHFYCELALQHMASDDLDRAMTLLKKGAAADKNS, ARVSIMMGRVFMAKGEYAKAVESLQRVISQDREL, and SETLEMLQTCYQQLGKTAEWAEFLQRAVEENTGA. Positions 357, 360, 371, and 374 each coordinate Fe cation.

It belongs to the LapB family.

The protein resides in the cell inner membrane. In terms of biological role, modulates cellular lipopolysaccharide (LPS) levels by regulating LpxC, which is involved in lipid A biosynthesis. May act by modulating the proteolytic activity of FtsH towards LpxC. May also coordinate assembly of proteins involved in LPS synthesis at the plasma membrane. This is Lipopolysaccharide assembly protein B from Escherichia coli O157:H7.